A 303-amino-acid polypeptide reads, in one-letter code: Nod factor export ATP-binding protein I (303 aa).

Residues 5–235 (LQMRNVRKLY…EIGCDVVEVY (231 aa)) enclose the ABC transporter domain. 37–44 (GPNGAGKT) is a binding site for ATP.

This sequence belongs to the ABC transporter superfamily. Lipooligosaccharide exporter (TC 3.A.1.102) family. The complex is composed of two ATP-binding proteins (NodI) and two transmembrane proteins (NodJ).

It is found in the cell inner membrane. Its function is as follows. Part of the ABC transporter complex NodIJ involved in the export of the nodulation factors (Nod factors), the bacterial signal molecules that induce symbiosis and subsequent nodulation induction. Nod factors are LCO (lipo-chitin oligosaccharide), a modified beta-1,4-linked N-acetylglucosamine oligosaccharide. This subunit is responsible for energy coupling to the transport system. In Cupriavidus metallidurans (strain ATCC 43123 / DSM 2839 / NBRC 102507 / CH34) (Ralstonia metallidurans), this protein is Nod factor export ATP-binding protein I.